Consider the following 492-residue polypeptide: Aspartyl/glutamyl-tRNA(Asn/Gln) amidotransferase subunit B (492 aa).

This sequence belongs to the GatB/GatE family. GatB subfamily. Heterotrimer of A, B and C subunits.

It catalyses the reaction L-glutamyl-tRNA(Gln) + L-glutamine + ATP + H2O = L-glutaminyl-tRNA(Gln) + L-glutamate + ADP + phosphate + H(+). The enzyme catalyses L-aspartyl-tRNA(Asn) + L-glutamine + ATP + H2O = L-asparaginyl-tRNA(Asn) + L-glutamate + ADP + phosphate + 2 H(+). Allows the formation of correctly charged Asn-tRNA(Asn) or Gln-tRNA(Gln) through the transamidation of misacylated Asp-tRNA(Asn) or Glu-tRNA(Gln) in organisms which lack either or both of asparaginyl-tRNA or glutaminyl-tRNA synthetases. The reaction takes place in the presence of glutamine and ATP through an activated phospho-Asp-tRNA(Asn) or phospho-Glu-tRNA(Gln). The protein is Aspartyl/glutamyl-tRNA(Asn/Gln) amidotransferase subunit B of Prochlorococcus marinus (strain SARG / CCMP1375 / SS120).